The following is a 470-amino-acid chain: Putative gustatory receptor 28b (470 aa).

Topologically, residues 1 to 76 (MDIEMAKEPV…KTGKKAIKKT (76 aa)) are cytoplasmic. Residues 77–97 (IFGYINGIMHIAMFVFAYSLT) traverse the membrane as a helical segment. Residues 98–119 (IYNNCESVASYFFRSRITYFGD) lie on the Extracellular side of the membrane. A helical membrane pass occupies residues 120 to 140 (LMQIVSGFIGVTVIYLTAFVP). The Cytoplasmic segment spans residues 141–175 (NHRLERCLQKFHTMDVQLQTVGVKIMYSKVLRFSY). Residues 176–196 (MVLISMFLVNVLFTGGTFSVL) form a helical membrane-spanning segment. Residues 197–204 (YSSEVAPT) lie on the Extracellular side of the membrane. A helical transmembrane segment spans residues 205–225 (MALHFTFLIQHTVIAIAIALF). The Cytoplasmic portion of the chain corresponds to 226–309 (SCFTYLVEMR…ATANKYFTYQ (84 aa)). Residues 310 to 330 (LLTIISIAFLIIVFDAYYVLE) form a helical membrane-spanning segment. Topologically, residues 331–346 (TLLGKSKRESKFKTVE) are extracellular. Residues 347-367 (FVTFFSCQMILYLIAIISIVE) traverse the membrane as a helical segment. Over 368–423 (GSNRAIKKSEKTGGIVHSLLNKTKSAEVKEKLQQFSMQLMHLKINFTAAGLFNIDR) the chain is Cytoplasmic. The helical transmembrane segment at 424-444 (TLYFTISGALTTYLIILLQFT) threads the bilayer. The Extracellular portion of the chain corresponds to 445–470 (SNSPNNGYGNGSSCCETFNNMTNHTL). Residues Asn454, Asn464, and Asn467 are each glycosylated (N-linked (GlcNAc...) asparagine).

The protein belongs to the insect chemoreceptor superfamily. Gustatory receptor (GR) family. Gr66a subfamily. In terms of tissue distribution, isoforms A and E have taste neuron-specific expression restricted to the labial palps, the internal taste organs in the pharynx, and the legs. In addition to expression in a large number of taste neurons, isoform A is also expressed in a few nonchemosensory neurons, including the campaniform sensilla of the wing, leg stretch receptors, and multiple dendritic neurons in the abdomen. Isoform B is the only receptor not expressed in gustatory receptor neurons in the labellum. We observe expression of this receptor in a single large cell at the base of each maxillary palp, in campaniform sensilla of the wing, and multiple dendritic neurons in the abdomen. Isoform C is expressed by many gustatory receptor neurons in the labial palps, the pharyngeal taste clusters, and taste neurons in the legs. In addition, isoform C expressed in a single cell at the base of the maxillary palps, neurons in the Johnston's organ (JO), campaniform sensilla of the wing, stretch receptors and the femoral chordotonal organ of the legs, and multiple dendritic neurons in the abdomen. Isoform D is expressed in a small number of gustatory receptor neurons in the labial palps, the ventral cibarial sense organ (VCSO), and legs. Atypical expression is observed in three neurons in the arista, campaniform sensilla of the wing, stretch and femoral chordotonal organ receptors in the legs, and multiple dendritic neurons in the abdomen. In larvae, Isoform A is expressed in neurons of the terminal external chemosensory organ and the dorsal external chemosensory organ; and isoform E is expressed in neurons of the terminal external chemosensory organ.

It localises to the cell membrane. In terms of biological role, probable gustatory receptor which mediates acceptance or avoidance behavior, depending on its substrates. Atypical expression also suggests nongustatory roles in the nervous system and tissues involved in proprioception, hygroreception, and other sensory modalities. It is also possible that it has chemosensory roles in the detection of internal ligands. The polypeptide is Putative gustatory receptor 28b (Gr28b) (Drosophila melanogaster (Fruit fly)).